We begin with the raw amino-acid sequence, 306 residues long: OVARIAN TUMOR DOMAIN-containing deubiquitinating enzyme 1 (306 aa).

In terms of domain architecture, OTU spans 81–295 (IGIRRTRGDG…PGHYDILYPK (215 aa)). Aspartate 89 is a catalytic residue. The active-site Nucleophile is cysteine 92. Catalysis depends on residues histidine 259 and histidine 288.

This sequence belongs to the peptidase C65 family.

It carries out the reaction Thiol-dependent hydrolysis of ester, thioester, amide, peptide and isopeptide bonds formed by the C-terminal Gly of ubiquitin (a 76-residue protein attached to proteins as an intracellular targeting signal).. With respect to regulation, cleavage activities for 'Lys-48'- and 'Lys-63'-linked ubiquitin (UB) tetramers is inhibited by UB aldehyde and N-ethylmaleimide but not by the metalloprotease inhibitors 1,10-phenanthroline and EDTA, and the serine protease inhibitor phenylmethylsulfonyl fluoride. Hydrolase that can remove conjugated ubiquitin from proteins in vitro and may therefore play an important regulatory role at the level of protein turnover by preventing degradation. Cysteine protease with a preference for Met-1 and 'Lys-48' over 'Lys-63'-linked ubiquitin (UB) tetramers (e.g. Ub2, Ub3 and Ub4) as substrates. In Arabidopsis thaliana (Mouse-ear cress), this protein is OVARIAN TUMOR DOMAIN-containing deubiquitinating enzyme 1.